The sequence spans 976 residues: DNA-directed RNA polymerase 1, mitochondrial (976 aa).

The transit peptide at M1–S42 directs the protein to the mitochondrion. Residues D677, K752, and D909 contribute to the active site.

Belongs to the phage and mitochondrial RNA polymerase family.

It is found in the mitochondrion. The enzyme catalyses RNA(n) + a ribonucleoside 5'-triphosphate = RNA(n+1) + diphosphate. DNA-dependent RNA polymerase catalyzes the transcription of DNA into RNA using the four ribonucleoside triphosphates as substrates. The chain is DNA-directed RNA polymerase 1, mitochondrial (RPOT1) from Arabidopsis thaliana (Mouse-ear cress).